The chain runs to 124 residues: Large ribosomal subunit protein bL12 (124 aa).

Belongs to the bacterial ribosomal protein bL12 family. As to quaternary structure, homodimer. Part of the ribosomal stalk of the 50S ribosomal subunit. Forms a multimeric L10(L12)X complex, where L10 forms an elongated spine to which 2 to 4 L12 dimers bind in a sequential fashion. Binds GTP-bound translation factors.

Forms part of the ribosomal stalk which helps the ribosome interact with GTP-bound translation factors. Is thus essential for accurate translation. The protein is Large ribosomal subunit protein bL12 of Campylobacter fetus subsp. fetus (strain 82-40).